A 546-amino-acid chain; its full sequence is Chaperonin GroEL 1 (546 aa).

Residues 30–33 (TLGP), Lys51, 87–91 (DGTTT), Gly415, 479–481 (NAA), and Asp495 contribute to the ATP site.

This sequence belongs to the chaperonin (HSP60) family. In terms of assembly, forms a cylinder of 14 subunits composed of two heptameric rings stacked back-to-back. Interacts with the co-chaperonin GroES.

The protein resides in the cytoplasm. It carries out the reaction ATP + H2O + a folded polypeptide = ADP + phosphate + an unfolded polypeptide.. Functionally, together with its co-chaperonin GroES, plays an essential role in assisting protein folding. The GroEL-GroES system forms a nano-cage that allows encapsulation of the non-native substrate proteins and provides a physical environment optimized to promote and accelerate protein folding. The polypeptide is Chaperonin GroEL 1 (Vibrio vulnificus (strain CMCP6)).